A 468-amino-acid chain; its full sequence is ATP synthase subunit beta (468 aa).

155 to 162 is a binding site for ATP; sequence GGAGVGKT.

This sequence belongs to the ATPase alpha/beta chains family. As to quaternary structure, F-type ATPases have 2 components, CF(1) - the catalytic core - and CF(0) - the membrane proton channel. CF(1) has five subunits: alpha(3), beta(3), gamma(1), delta(1), epsilon(1). CF(0) has three main subunits: a(1), b(2) and c(9-12). The alpha and beta chains form an alternating ring which encloses part of the gamma chain. CF(1) is attached to CF(0) by a central stalk formed by the gamma and epsilon chains, while a peripheral stalk is formed by the delta and b chains.

It is found in the cell membrane. The catalysed reaction is ATP + H2O + 4 H(+)(in) = ADP + phosphate + 5 H(+)(out). In terms of biological role, produces ATP from ADP in the presence of a proton gradient across the membrane. The catalytic sites are hosted primarily by the beta subunits. The sequence is that of ATP synthase subunit beta from Streptococcus pyogenes serotype M3 (strain ATCC BAA-595 / MGAS315).